Reading from the N-terminus, the 435-residue chain is ATP-dependent protease ATPase subunit HslU (435 aa).

ATP is bound by residues I18, 60–65, D248, E313, and R385; that span reads GVGKTE.

The protein belongs to the ClpX chaperone family. HslU subfamily. In terms of assembly, a double ring-shaped homohexamer of HslV is capped on each side by a ring-shaped HslU homohexamer. The assembly of the HslU/HslV complex is dependent on binding of ATP.

The protein resides in the cytoplasm. Its function is as follows. ATPase subunit of a proteasome-like degradation complex; this subunit has chaperone activity. The binding of ATP and its subsequent hydrolysis by HslU are essential for unfolding of protein substrates subsequently hydrolyzed by HslV. HslU recognizes the N-terminal part of its protein substrates and unfolds these before they are guided to HslV for hydrolysis. The polypeptide is ATP-dependent protease ATPase subunit HslU (Rhizobium etli (strain ATCC 51251 / DSM 11541 / JCM 21823 / NBRC 15573 / CFN 42)).